We begin with the raw amino-acid sequence, 271 residues long: Cytosolic Fe-S cluster assembly factor NUBP2 (271 aa).

Residue M1 is modified to N-acetylmethionine. Position 22–29 (22–29 (GKGGVGKS)) interacts with ATP. 2 residues coordinate [4Fe-4S] cluster: C196 and C199.

This sequence belongs to the Mrp/NBP35 ATP-binding proteins family. NUBP2/CFD1 subfamily. Heterotetramer of 2 NUBP1 and 2 NUBP2 chains. Interacts with KIFC1. Interacts with NUBP1. Requires [4Fe-4S] cluster as cofactor. In terms of tissue distribution, widely expressed with highest expression in skeletal muscle.

Its subcellular location is the nucleus. The protein localises to the cytoplasm. The protein resides in the cytoskeleton. It localises to the microtubule organizing center. It is found in the centrosome. Its subcellular location is the cilium axoneme. The protein localises to the centriole. In terms of biological role, component of the cytosolic iron-sulfur (Fe/S) protein assembly (CIA) machinery. Required for maturation of extramitochondrial Fe-S proteins. The NUBP1-NUBP2 heterotetramer forms a Fe-S scaffold complex, mediating the de novo assembly of an Fe-S cluster and its transfer to target apoproteins. Negatively regulates cilium formation and structure. This Homo sapiens (Human) protein is Cytosolic Fe-S cluster assembly factor NUBP2.